Reading from the N-terminus, the 132-residue chain is Small ribosomal subunit protein uS8 (132 aa).

This sequence belongs to the universal ribosomal protein uS8 family. As to quaternary structure, part of the 30S ribosomal subunit. Contacts proteins S5 and S12.

Functionally, one of the primary rRNA binding proteins, it binds directly to 16S rRNA central domain where it helps coordinate assembly of the platform of the 30S subunit. This Anaeromyxobacter sp. (strain Fw109-5) protein is Small ribosomal subunit protein uS8.